A 509-amino-acid chain; its full sequence is uncharacterized protein (509 aa).

An N-terminal signal peptide occupies residues 1–32 (MMLPKRNIIHFLRKRAIFIVAAFIALLTVDYS).

The protein resides in the endoplasmic reticulum. This is an uncharacterized protein from Schizosaccharomyces pombe (strain 972 / ATCC 24843) (Fission yeast).